Here is a 103-residue protein sequence, read N- to C-terminus: Small ribosomal subunit protein uS10 (103 aa).

It belongs to the universal ribosomal protein uS10 family. As to quaternary structure, part of the 30S ribosomal subunit.

In terms of biological role, involved in the binding of tRNA to the ribosomes. The chain is Small ribosomal subunit protein uS10 from Azoarcus sp. (strain BH72).